A 704-amino-acid chain; its full sequence is Ribosomal RNA large subunit methyltransferase K/L (704 aa).

One can recognise a THUMP domain in the interval 43–154 (TMYQSLLWSR…KEKASLSLDL (112 aa)).

It belongs to the methyltransferase superfamily. RlmKL family.

The protein resides in the cytoplasm. It catalyses the reaction guanosine(2445) in 23S rRNA + S-adenosyl-L-methionine = N(2)-methylguanosine(2445) in 23S rRNA + S-adenosyl-L-homocysteine + H(+). It carries out the reaction guanosine(2069) in 23S rRNA + S-adenosyl-L-methionine = N(2)-methylguanosine(2069) in 23S rRNA + S-adenosyl-L-homocysteine + H(+). In terms of biological role, specifically methylates the guanine in position 2445 (m2G2445) and the guanine in position 2069 (m7G2069) of 23S rRNA. In Proteus mirabilis (strain HI4320), this protein is Ribosomal RNA large subunit methyltransferase K/L.